We begin with the raw amino-acid sequence, 892 residues long: Alanine--tRNA ligase (892 aa).

Zn(2+) is bound by residues H594, H598, C702, and H706.

It belongs to the class-II aminoacyl-tRNA synthetase family. Zn(2+) is required as a cofactor.

It localises to the cytoplasm. The enzyme catalyses tRNA(Ala) + L-alanine + ATP = L-alanyl-tRNA(Ala) + AMP + diphosphate. Functionally, catalyzes the attachment of alanine to tRNA(Ala) in a two-step reaction: alanine is first activated by ATP to form Ala-AMP and then transferred to the acceptor end of tRNA(Ala). Also edits incorrectly charged Ser-tRNA(Ala) and Gly-tRNA(Ala) via its editing domain. This Pyrobaculum neutrophilum (strain DSM 2338 / JCM 9278 / NBRC 100436 / V24Sta) (Thermoproteus neutrophilus) protein is Alanine--tRNA ligase.